A 274-amino-acid chain; its full sequence is F-box protein SKIP5 (274 aa).

One can recognise an F-box domain in the interval 32–79; the sequence is LTSLNNLDDGCLMHILSFLSPIPDRYNTALVCHRWRYLACHPRLWLRV.

In terms of assembly, part of a SCF (SKP1-cullin-F-box) protein ligase complex. Interacts with SKP1A/ASK1.

Its pathway is protein modification; protein ubiquitination. This is F-box protein SKIP5 (SKIP5) from Arabidopsis thaliana (Mouse-ear cress).